The following is a 200-amino-acid chain: Recombination protein RecR (200 aa).

A C4-type zinc finger spans residues 59-74 (CEICGNIDTRSPCTVC). A Toprim domain is found at 82 to 177 (SIIVVVADVA…KVTRLAHGVP (96 aa)).

It belongs to the RecR family.

Functionally, may play a role in DNA repair. It seems to be involved in an RecBC-independent recombinational process of DNA repair. It may act with RecF and RecO. The protein is Recombination protein RecR of Nitrobacter hamburgensis (strain DSM 10229 / NCIMB 13809 / X14).